Here is a 474-residue protein sequence, read N- to C-terminus: UDP-N-acetylmuramoyl-L-alanyl-D-glutamate--2,6-diaminopimelate ligase (474 aa).

Residue Ser21 participates in UDP-N-acetyl-alpha-D-muramoyl-L-alanyl-D-glutamate binding. Residue 93-99 coordinates ATP; it reads GTNGKSS. UDP-N-acetyl-alpha-D-muramoyl-L-alanyl-D-glutamate-binding positions include 139–140, Ser166, Gln172, and Arg174; that span reads TT. Lys206 bears the N6-carboxylysine mark. Meso-2,6-diaminopimelate-binding positions include Arg367, 391–394, Gly441, and Glu445; that span reads DNPR. The short motif at 391–394 is the Meso-diaminopimelate recognition motif element; it reads DNPR.

The protein belongs to the MurCDEF family. MurE subfamily. Mg(2+) is required as a cofactor. Carboxylation is probably crucial for Mg(2+) binding and, consequently, for the gamma-phosphate positioning of ATP.

The protein resides in the cytoplasm. It carries out the reaction UDP-N-acetyl-alpha-D-muramoyl-L-alanyl-D-glutamate + meso-2,6-diaminopimelate + ATP = UDP-N-acetyl-alpha-D-muramoyl-L-alanyl-gamma-D-glutamyl-meso-2,6-diaminopimelate + ADP + phosphate + H(+). Its pathway is cell wall biogenesis; peptidoglycan biosynthesis. In terms of biological role, catalyzes the addition of meso-diaminopimelic acid to the nucleotide precursor UDP-N-acetylmuramoyl-L-alanyl-D-glutamate (UMAG) in the biosynthesis of bacterial cell-wall peptidoglycan. The protein is UDP-N-acetylmuramoyl-L-alanyl-D-glutamate--2,6-diaminopimelate ligase of Rickettsia bellii (strain RML369-C).